We begin with the raw amino-acid sequence, 422 residues long: G-protein coupled receptor 151 protein (422 aa).

Over 1–45 (MGKAMLRAGFADTNSSNMNESFARLHFAGGYLPSDSKDWRTIIPS) the chain is Extracellular. Residues asparagine 14 and asparagine 19 are each glycosylated (N-linked (GlcNAc...) asparagine). A helical transmembrane segment spans residues 46–66 (LLMAVCLVGLVGNLCVIGILL). The Cytoplasmic segment spans residues 67–76 (HGVWKRKPST). The chain crosses the membrane as a helical span at residues 77 to 97 (IHSLILNLSLADFSLLLFSAP). The Extracellular segment spans residues 98–123 (VRAAAYSKGVWDLGWFICKSSDWFTH). A disulfide bond links cysteine 115 and cysteine 191. The chain crosses the membrane as a helical span at residues 124-144 (VCMAAKSLTFVVVAKACFAYA). Residues 145–157 (SDPAKQESIHSRT) lie on the Cytoplasmic side of the membrane. A helical transmembrane segment spans residues 158 to 178 (IWSVLAGIWVVASLLPLPEWL). At 179–205 (FSTTRRHAGVEMCLVDVPAVAEEFMSM) the chain is on the extracellular side. A helical transmembrane segment spans residues 206–226 (FGKLYPLLVFCLPLLLAGVYF). The Cytoplasmic segment spans residues 227-259 (WRAYDQCKTRCTKTRNLRDQMRSKQLTVMLLST). The helical transmembrane segment at 260 to 280 (AIISALLWLPEWIAWLWVWHV) threads the bilayer. Topologically, residues 281 to 290 (KAGGPMPPQG) are extracellular. The helical transmembrane segment at 291-311 (FIALSQVLMFFTSTANPLIFL) threads the bilayer. Over 312–422 (VMSEEFKAGL…HEGQETEGCN (111 aa)) the chain is Cytoplasmic. Residues 339 to 422 (VQEAPAGNTE…HEGQETEGCN (84 aa)) are disordered. Over residues 366–380 (TDGRGSPDDSKEKSG) the composition is skewed to basic and acidic residues.

In terms of tissue distribution, high expression in the brain and lower levels in kidney and liver. In the nervous system expressed specifically in the habenular area (at protein level).

It is found in the cell membrane. Functionally, proton-sensing G-protein coupled receptor. In Mus musculus (Mouse), this protein is G-protein coupled receptor 151 protein (Gpr151).